We begin with the raw amino-acid sequence, 254 residues long: Persulfide dioxygenase ETHE1, mitochondrial (254 aa).

The transit peptide at 1-7 (MASAVVR) directs the protein to the mitochondrion. Residues serine 14, serine 17, and serine 19 each carry the phosphoserine modification. N6-acetyllysine; alternate is present on lysine 32. At lysine 32 the chain carries N6-succinyllysine; alternate. Lysine 66 carries the post-translational modification N6-acetyllysine. Residues histidine 79, histidine 135, and aspartate 154 each contribute to the Fe cation site. Lysine 172 is subject to N6-acetyllysine; alternate. An N6-succinyllysine; alternate modification is found at lysine 172.

The protein belongs to the metallo-beta-lactamase superfamily. Glyoxalase II family. As to quaternary structure, homodimer. Monomer. Interacts with TST. May interact with RELA. Requires Fe(2+) as cofactor.

It is found in the cytoplasm. Its subcellular location is the nucleus. The protein localises to the mitochondrion matrix. It catalyses the reaction S-sulfanylglutathione + O2 + H2O = sulfite + glutathione + 2 H(+). First described as a protein that can shuttle between the nucleus and the cytoplasm and suppress p53-induced apoptosis by sequestering the transcription factor RELA/NFKB3 in the cytoplasm and preventing its accumulation in the nucleus. Sulfur dioxygenase that plays an essential role in hydrogen sulfide catabolism in the mitochondrial matrix. Hydrogen sulfide (H(2)S) is first oxidized by SQRDL, giving rise to cysteine persulfide residues. ETHE1 consumes molecular oxygen to catalyze the oxidation of the persulfide, once it has been transferred to a thiophilic acceptor, such as glutathione (R-SSH). Plays an important role in metabolic homeostasis in mitochondria by metabolizing hydrogen sulfide and preventing the accumulation of supraphysiological H(2)S levels that have toxic effects, due to the inhibition of cytochrome c oxidase. The sequence is that of Persulfide dioxygenase ETHE1, mitochondrial (Ethe1) from Mus musculus (Mouse).